Reading from the N-terminus, the 203-residue chain is Outer-membrane lipoprotein LolB (203 aa).

Residues 1 to 20 form the signal peptide; it reads MNRSRRLALLCLGVPLLLQA. Residue Cys-21 is the site of N-palmitoyl cysteine attachment. The S-diacylglycerol cysteine moiety is linked to residue Cys-21.

Belongs to the LolB family. Monomer.

Its subcellular location is the cell outer membrane. Functionally, plays a critical role in the incorporation of lipoproteins in the outer membrane after they are released by the LolA protein. The sequence is that of Outer-membrane lipoprotein LolB from Cupriavidus taiwanensis (strain DSM 17343 / BCRC 17206 / CCUG 44338 / CIP 107171 / LMG 19424 / R1) (Ralstonia taiwanensis (strain LMG 19424)).